The following is a 1769-amino-acid chain: U3 small nucleolar RNA-associated protein 10 (1769 aa).

Residue Ser-2 is modified to N-acetylserine. An HEAT repeat occupies 1729–1767 (LVPVIAELLEDDDEEIEREVRTGLVKVVENVLGEPFDRY).

The protein belongs to the HEATR1/UTP10 family. As to quaternary structure, interacts with snoRNA U3. Interacts with MPP10. Component of the ribosomal small subunit (SSU) processome composed of at least 40 protein subunits and snoRNA U3. In the absence of snoRNA3, forms a complex with other t-UTPs. This complex can associate with pre-18S ribosomal RNAs.

It localises to the nucleus. The protein localises to the nucleolus. The protein resides in the mitochondrion. In terms of biological role, involved in nucleolar processing of pre-18S ribosomal RNA. Required for optimal pre-ribosomal RNA transcription by RNA polymerase I together with a subset of U3 proteins required for transcription (t-UTPs). Involved in ribosome biosynthesis. The chain is U3 small nucleolar RNA-associated protein 10 (UTP10) from Saccharomyces cerevisiae (strain ATCC 204508 / S288c) (Baker's yeast).